A 287-amino-acid chain; its full sequence is ATP synthase gamma chain (287 aa).

This sequence belongs to the ATPase gamma chain family. In terms of assembly, F-type ATPases have 2 components, CF(1) - the catalytic core - and CF(0) - the membrane proton channel. CF(1) has five subunits: alpha(3), beta(3), gamma(1), delta(1), epsilon(1). CF(0) has three main subunits: a, b and c.

It is found in the cell inner membrane. Its function is as follows. Produces ATP from ADP in the presence of a proton gradient across the membrane. The gamma chain is believed to be important in regulating ATPase activity and the flow of protons through the CF(0) complex. This chain is ATP synthase gamma chain, found in Escherichia coli (strain 55989 / EAEC).